A 161-amino-acid polypeptide reads, in one-letter code: Ribosome maturation factor RimP (161 aa).

This sequence belongs to the RimP family.

It is found in the cytoplasm. Its function is as follows. Required for maturation of 30S ribosomal subunits. The sequence is that of Ribosome maturation factor RimP from Janthinobacterium sp. (strain Marseille) (Minibacterium massiliensis).